Reading from the N-terminus, the 337-residue chain is Inositol 2-dehydrogenase (337 aa).

The protein belongs to the Gfo/Idh/MocA family. In terms of assembly, homotetramer.

It catalyses the reaction myo-inositol + NAD(+) = scyllo-inosose + NADH + H(+). In terms of biological role, involved in the oxidation of myo-inositol (MI) to 2-keto-myo-inositol (2KMI or 2-inosose). The protein is Inositol 2-dehydrogenase of Pseudarthrobacter chlorophenolicus (strain ATCC 700700 / DSM 12829 / CIP 107037 / JCM 12360 / KCTC 9906 / NCIMB 13794 / A6) (Arthrobacter chlorophenolicus).